The chain runs to 80 residues: U6 snRNA-associated Sm-like protein LSm6 (80 aa).

The Sm domain occupies 7–79 (TPSDFLKQII…VLYISTQKRR (73 aa)). Residue Lys59 is modified to N6-acetyllysine.

Belongs to the snRNP Sm proteins family. SmF/LSm6 subfamily. In terms of assembly, component of the precatalytic spliceosome (spliceosome B complex). Component of the U4/U6-U5 tri-snRNP complex, a building block of the precatalytic spliceosome (spliceosome B complex). The U4/U6-U5 tri-snRNP complex is composed of the U4, U6 and U5 snRNAs and at least PRPF3, PRPF4, PRPF6, PRPF8, PRPF31, SNRNP200, TXNL4A, SNRNP40, SNRPB, SNRPD1, SNRPD2, SNRPD3, SNRPE, SNRPF, SNRPG, DDX23, CD2BP2, PPIH, SNU13, EFTUD2, SART1 and USP39, plus LSM2, LSM3, LSM4, LSM5, LSM6, LSM7 and LSM8. LSM2, LSM3, LSM4, LSM5, LSM6, LSM7 and LSM8 form a heptameric, ring-shaped subcomplex (the LSM2-8 complex) that is part of the U4/U6-U5 tri-snRNP complex and the precatalytic spliceosome. Component of the heptameric LSM1-LSM7 complex, which consists of LSM1, LSM2, LSM3, LSM4, LSM5, LSM6 and LSM7.

The protein resides in the cytoplasm. The protein localises to the nucleus. Functionally, plays a role in pre-mRNA splicing as component of the U4/U6-U5 tri-snRNP complex that is involved in spliceosome assembly, and as component of the precatalytic spliceosome (spliceosome B complex). The heptameric LSM2-8 complex binds specifically to the 3'-terminal U-tract of U6 snRNA. Component of LSm protein complexes, which are involved in RNA processing and may function in a chaperone-like manner, facilitating the efficient association of RNA processing factors with their substrates. Component of the cytoplasmic LSM1-LSM7 complex, which is thought to be involved in mRNA degradation by activating the decapping step in the 5'-to-3' mRNA decay pathway. In Homo sapiens (Human), this protein is U6 snRNA-associated Sm-like protein LSm6 (LSM6).